We begin with the raw amino-acid sequence, 206 residues long: Guanylate kinase (206 aa).

The 179-residue stretch at 6–184 (GILFILSGPS…AVDKVKTIIK (179 aa)) folds into the Guanylate kinase-like domain. 13 to 20 (GPSGVGKG) contributes to the ATP binding site.

This sequence belongs to the guanylate kinase family.

Its subcellular location is the cytoplasm. The catalysed reaction is GMP + ATP = GDP + ADP. In terms of biological role, essential for recycling GMP and indirectly, cGMP. The polypeptide is Guanylate kinase (Oceanobacillus iheyensis (strain DSM 14371 / CIP 107618 / JCM 11309 / KCTC 3954 / HTE831)).